The sequence spans 175 residues: Alkyl hydroperoxide reductase AhpD (175 aa).

C131 serves as the catalytic Proton donor. Residues C131 and C134 are joined by a disulfide bond. C134 serves as the catalytic Cysteine sulfenic acid (-SOH) intermediate.

The protein belongs to the AhpD family.

It catalyses the reaction N(6)-[(R)-dihydrolipoyl]-L-lysyl-[lipoyl-carrier protein] + a hydroperoxide = N(6)-[(R)-lipoyl]-L-lysyl-[lipoyl-carrier protein] + an alcohol + H2O. Antioxidant protein with alkyl hydroperoxidase activity. Required for the reduction of the AhpC active site cysteine residues and for the regeneration of the AhpC enzyme activity. The protein is Alkyl hydroperoxide reductase AhpD of Brucella canis (strain ATCC 23365 / NCTC 10854 / RM-666).